The following is a 268-amino-acid chain: Probable ribosomal RNA small subunit methyltransferase A (268 aa).

S-adenosyl-L-methionine is bound by residues His-23, Leu-25, Gly-50, Glu-71, Asp-95, and Asn-110.

Belongs to the class I-like SAM-binding methyltransferase superfamily. rRNA adenine N(6)-methyltransferase family. RsmA subfamily.

It is found in the cytoplasm. In terms of biological role, specifically dimethylates two adjacent adenosines in the loop of a conserved hairpin near the 3'-end of 16S rRNA in the 30S particle. May play a critical role in biogenesis of 30S subunits. This Pyrococcus horikoshii (strain ATCC 700860 / DSM 12428 / JCM 9974 / NBRC 100139 / OT-3) protein is Probable ribosomal RNA small subunit methyltransferase A.